The primary structure comprises 76 residues: ATP synthase subunit 9, mitochondrial (76 aa).

A run of 2 helical transmembrane segments spans residues 13-35 and 50-72; these read GIST…ALIQ and FAIL…SFLL.

The protein belongs to the ATPase C chain family. In terms of assembly, F-type ATPases have 2 components, CF(1) - the catalytic core - and CF(0) - the membrane proton channel. In yeast, the dimeric form of ATP synthase consists of 18 polypeptides: alpha, beta, gamma, delta, epsilon, 4 (B), 5 (OSCP), 6 (A), 8, 9 (C), d, E (Tim11), f, g, h, i, j and k.

Its subcellular location is the mitochondrion membrane. Its function is as follows. Mitochondrial membrane ATP synthase (F(1)F(0) ATP synthase or Complex V) produces ATP from ADP in the presence of a proton gradient across the membrane which is generated by electron transport complexes of the respiratory chain. F-type ATPases consist of two structural domains, F(1) - containing the extramembraneous catalytic core and F(0) - containing the membrane proton channel, linked together by a central stalk and a peripheral stalk. During catalysis, ATP synthesis in the catalytic domain of F(1) is coupled via a rotary mechanism of the central stalk subunits to proton translocation. Part of the complex F(0) domain. A homomeric c-ring of probably 10 subunits is part of the complex rotary element. This chain is ATP synthase subunit 9, mitochondrial (ATP9), found in Eremothecium gossypii (strain ATCC 10895 / CBS 109.51 / FGSC 9923 / NRRL Y-1056) (Yeast).